The sequence spans 279 residues: Oxygen-dependent coproporphyrinogen-III oxidase (279 aa).

Substrate is bound at residue S102. Positions 106 and 116 each coordinate a divalent metal cation. H116 (proton donor) is an active-site residue. Substrate is bound at residue 118–120 (NTR). A divalent metal cation is bound by residues H149 and H179. Residues 244–279 (YVEFNLLYDRGTKFGLMTDGNVEAILMSLPPEVKWA) form an important for dimerization region.

Belongs to the aerobic coproporphyrinogen-III oxidase family. In terms of assembly, homodimer. It depends on a divalent metal cation as a cofactor.

Its subcellular location is the cytoplasm. It catalyses the reaction coproporphyrinogen III + O2 + 2 H(+) = protoporphyrinogen IX + 2 CO2 + 2 H2O. Its pathway is porphyrin-containing compound metabolism; protoporphyrin-IX biosynthesis; protoporphyrinogen-IX from coproporphyrinogen-III (O2 route): step 1/1. Involved in the heme biosynthesis. Catalyzes the aerobic oxidative decarboxylation of propionate groups of rings A and B of coproporphyrinogen-III to yield the vinyl groups in protoporphyrinogen-IX. This Rickettsia bellii (strain OSU 85-389) protein is Oxygen-dependent coproporphyrinogen-III oxidase.